Here is a 401-residue protein sequence, read N- to C-terminus: Acetate kinase (401 aa).

Position 7 (Asn7) interacts with Mg(2+). Residue Lys14 participates in ATP binding. Arg96 contacts substrate. The active-site Proton donor/acceptor is Asp153. Residues 212–216 (HLGNG), 287–289 (DMR), and 335–339 (GIGEN) each bind ATP. Glu388 is a binding site for Mg(2+).

This sequence belongs to the acetokinase family. Homodimer. Mg(2+) serves as cofactor. Mn(2+) is required as a cofactor.

The protein localises to the cytoplasm. The enzyme catalyses acetate + ATP = acetyl phosphate + ADP. It participates in metabolic intermediate biosynthesis; acetyl-CoA biosynthesis; acetyl-CoA from acetate: step 1/2. Its function is as follows. Catalyzes the formation of acetyl phosphate from acetate and ATP. Can also catalyze the reverse reaction. The chain is Acetate kinase from Microcystis aeruginosa (strain NIES-843 / IAM M-2473).